The following is a 354-amino-acid chain: Guanine nucleotide-binding protein G(i) subunit alpha-1 (354 aa).

A lipid anchor (N-myristoyl glycine) is attached at Gly-2. Residue Cys-3 is the site of S-palmitoyl cysteine attachment. The G-alpha domain occupies 32 to 354 (REVKLLLLGA…KNNLKDCGLF (323 aa)). The tract at residues 35-48 (KLLLLGAGESGKST) is G1 motif. GTP-binding positions include 43-48 (ESGKST), 150-151 (DS), and 175-178 (LRTR). Residue Ser-47 participates in Mg(2+) binding. The tract at residues 173-181 (DVLRTRVKT) is G2 motif. Residue Thr-181 participates in Mg(2+) binding. Positions 196–205 (FKMFDVGGQR) are G3 motif. GTP is bound by residues 200-204 (DVGGQ), 269-272 (NKKD), and Ala-326. The interval 265-272 (ILFLNKKD) is G4 motif. The G5 motif stretch occupies residues 324-329 (TCATDT).

Belongs to the G-alpha family. G(i/o/t/z) subfamily. As to quaternary structure, heterotrimeric G proteins are composed of 3 units; alpha, beta and gamma. The alpha chain contains the guanine nucleotide binding site. Part of a spindle orientation complex. Identified in complex with the beta subunit GNB1 and the gamma subunit GNG1. Identified in complex with the beta subunit GNB1 and the gamma subunit GNG2. GTP binding causes dissociation of the heterotrimer, liberating the individual subunits so that they can interact with downstream effector proteins. Myristoylation at Gly-2 is required for membrane anchoring before palmitoylation. Post-translationally, palmitoylation at Cys-3 varies with membrane lipid composition.

Its subcellular location is the nucleus. It is found in the cytoplasm. The protein localises to the cell membrane. It localises to the cytoskeleton. The protein resides in the microtubule organizing center. Its subcellular location is the centrosome. It is found in the cell cortex. The protein localises to the membrane. The catalysed reaction is GTP + H2O = GDP + phosphate + H(+). Guanine nucleotide-binding proteins (G proteins) function as transducers downstream of G protein-coupled receptors (GPCRs) in numerous signaling cascades. The alpha chain contains the guanine nucleotide binding site and alternates between an active, GTP-bound state and an inactive, GDP-bound state. Signaling by an activated GPCR promotes GDP release and GTP binding. The alpha subunit has a low GTPase activity that converts bound GTP to GDP, thereby terminating the signal. Both GDP release and GTP hydrolysis are modulated by numerous regulatory proteins. Signaling is mediated via effector proteins, such as adenylate cyclase. Inhibits adenylate cyclase activity of ADCY1, ADCY5 and ADCY6, leading to decreased intracellular cAMP levels. Required for cortical dynein-dynactin complex recruitment during metaphase. The polypeptide is Guanine nucleotide-binding protein G(i) subunit alpha-1 (GNAI1) (Gallus gallus (Chicken)).